The primary structure comprises 376 residues: Chaperone protein DnaJ (376 aa).

One can recognise a J domain in the interval 5 to 70; it reads DFYDVLGVSK…EKKQNYDNFG (66 aa). The segment at 137-215 adopts a CR-type zinc-finger fold; it reads GKKQDIKFST…CNGQGNKQAS (79 aa). Zn(2+) is bound by residues Cys-150, Cys-153, Cys-167, Cys-170, Cys-189, Cys-192, Cys-203, and Cys-206. 4 CXXCXGXG motif repeats span residues 150-157, 167-174, 189-196, and 203-210; these read CNTCNGNG, CTVCGGNG, CPQCAGSG, and CTDCNGQG.

It belongs to the DnaJ family. In terms of assembly, homodimer. Zn(2+) serves as cofactor.

It localises to the cytoplasm. In terms of biological role, participates actively in the response to hyperosmotic and heat shock by preventing the aggregation of stress-denatured proteins and by disaggregating proteins, also in an autonomous, DnaK-independent fashion. Unfolded proteins bind initially to DnaJ; upon interaction with the DnaJ-bound protein, DnaK hydrolyzes its bound ATP, resulting in the formation of a stable complex. GrpE releases ADP from DnaK; ATP binding to DnaK triggers the release of the substrate protein, thus completing the reaction cycle. Several rounds of ATP-dependent interactions between DnaJ, DnaK and GrpE are required for fully efficient folding. Also involved, together with DnaK and GrpE, in the DNA replication of plasmids through activation of initiation proteins. In Pelagibacter ubique (strain HTCC1062), this protein is Chaperone protein DnaJ.